We begin with the raw amino-acid sequence, 168 residues long: Cytochrome c-type biogenesis protein CcmE (168 aa).

The Cytoplasmic segment spans residues 1–7 (MTRKKRR). The chain crosses the membrane as a helical; Signal-anchor for type II membrane protein span at residues 8 to 28 (LYMLGLALLGLGTATALTLSA). At 29-168 (FEENIVFFYS…KVHATTTLKP (140 aa)) the chain is on the periplasmic side. Positions 122 and 126 each coordinate heme. The interval 149 to 168 (SIYTPADSDDKVHATTTLKP) is disordered.

This sequence belongs to the CcmE/CycJ family.

Its subcellular location is the cell inner membrane. In terms of biological role, heme chaperone required for the biogenesis of c-type cytochromes. Transiently binds heme delivered by CcmC and transfers the heme to apo-cytochromes in a process facilitated by CcmF and CcmH. This is Cytochrome c-type biogenesis protein CcmE from Rhodospirillum centenum (strain ATCC 51521 / SW).